A 166-amino-acid chain; its full sequence is Small ribosomal subunit protein eS10 (166 aa).

Residues 95–166 (RRQTRPETAR…FGRGRGQQPQ (72 aa)) are disordered. Residues 98–129 (TRPETARPRPKGLEGERPARLARGEGDRDAYR) show a composition bias toward basic and acidic residues. A compositionally biased stretch (low complexity) spans 143–154 (AGAGAATEFQFR). Residues 155–166 (GGFGRGRGQQPQ) show a composition bias toward gly residues.

Belongs to the eukaryotic ribosomal protein eS10 family. In terms of assembly, component of the small ribosomal subunit.

The protein resides in the cytoplasm. It is found in the nucleus. Its subcellular location is the nucleolus. In terms of biological role, component of the 40S ribosomal subunit. The ribosome is a large ribonucleoprotein complex responsible for the synthesis of proteins in the cell. In Ictalurus punctatus (Channel catfish), this protein is Small ribosomal subunit protein eS10 (rps10).